We begin with the raw amino-acid sequence, 610 residues long: MWLPLVLFLAVLLLAVVCKVYLGLFSGKSPNPFSEDVKRPPAPLVTDKEARKKVLKQAFSASRVPEKLDVVVIGSGFGGLAAAAILAKAGKRVLVLEQHTKAGGACHTFGENGLEFDTGIHYIGRMEEGSIGRFILDQITEGQLDWVPMSSPFDIMVLEGPNGRKEYPMYSGEKAYIQGLKEKFPQEEAIIDKYIKLVKVVSNGVAHAILLKFLPLPVIQLLDRCGLLTRFSPFLHASTQSLAEVLQQLGASSELQAVLSYIFPTYGVTPRHSAFSMHALLVNHYLKGAFYPRGGSSEIAFHTIPVIQRAGGAVLTRATVQSVLLDSAGKACGVSVKKGHELVNIYCPVVVSNAGLFNTYEHLLPGNARCLPGVKQQLGMVRPGLGMMSVFICLQGTKEDLHLPSTNYYVYHDTDMDQAMERYVSMPREKAAEHIPLLFIAFPSAKDPTWEDRFPGRSSMIMLIPSAYEWFEEWQAELKGKRGSDYETYKNSFVEASMSVAMKLFPQLEGKVESVTAGSPLTNQFYLAAPRGACYGADHDLGRLHPRVMASLRAQSPIPNLYLTGQDIFTCGLVGALQGALLCSSAILKRNLYSDLKDLGSRIQAQKKKN.

A signal peptide spans 1-18; that stretch reads MWLPLVLFLAVLLLAVVC.

This sequence belongs to the carotenoid/retinoid oxidoreductase family. CrtISO subfamily. NAD(+) is required as a cofactor. Requires NADP(+) as cofactor. FAD serves as cofactor.

The protein localises to the endoplasmic reticulum membrane. The enzyme catalyses all-trans-13,14-dihydroretinol + A = all-trans-retinol + AH2. Catalyzes the saturation of all-trans-retinol to all-trans-13,14-dihydroretinol. Does not exhibit any activity toward all-trans-retinoic acid, nor 9-cis, 11-cis or 13-cis-retinol isomers. May play a role in the metabolism of vitamin A. Independently of retinol conversion, may regulate liver metabolism upstream of MLXIPL/ChREBP. May play a role in adipocyte differentiation. This chain is All-trans-retinol 13,14-reductase (RETSAT), found in Macaca fascicularis (Crab-eating macaque).